A 280-amino-acid polypeptide reads, in one-letter code: 3-methyl-2-oxobutanoate hydroxymethyltransferase (280 aa).

Residues Asp45 and Asp84 each coordinate Mg(2+). Residues 45 to 46, Asp84, and Lys114 each bind 3-methyl-2-oxobutanoate; that span reads DS. Glu116 contacts Mg(2+). Glu183 serves as the catalytic Proton acceptor.

Belongs to the PanB family. As to quaternary structure, homodecamer; pentamer of dimers. Requires Mg(2+) as cofactor.

The protein resides in the cytoplasm. It carries out the reaction 3-methyl-2-oxobutanoate + (6R)-5,10-methylene-5,6,7,8-tetrahydrofolate + H2O = 2-dehydropantoate + (6S)-5,6,7,8-tetrahydrofolate. It participates in cofactor biosynthesis; (R)-pantothenate biosynthesis; (R)-pantoate from 3-methyl-2-oxobutanoate: step 1/2. In terms of biological role, catalyzes the reversible reaction in which hydroxymethyl group from 5,10-methylenetetrahydrofolate is transferred onto alpha-ketoisovalerate to form ketopantoate. In Clostridium kluyveri (strain ATCC 8527 / DSM 555 / NBRC 12016 / NCIMB 10680 / K1), this protein is 3-methyl-2-oxobutanoate hydroxymethyltransferase.